A 536-amino-acid polypeptide reads, in one-letter code: MAHCVTLVQLSVSCDHLIDKDIGSKSDPLCVLLQDVGGAWAELCRTERVRNCSSPAFSKTLQIEYYFETVQKLRFGIYDIDNKTPELGDDDFLGGAECSLGQIVSSQTLTLPLMLKPGKPAGRGTITVSAQELKDSRVVTMEVEARNLDKKDFLGKSDPFLEFFRQGDGKWHLAYRTEVVKNNLNPTWKRFSVSLQHFCGGDLNTPIQVRCSDYDSDGSHDLIGTFHTTLAQLQAVPAEFECIHPEKQQRKKSYKNSGTVCVKTCRVETEYSFLDYVMGGCQINFTVGVDFTGSNGDPSSPDSLHYLSPTGVNEYLTALWSVGSVVQDYDSDKLFPAFGFGAQVPPDWQVSHEFALNFNPSNPYCAGIQGIVDAYRQALPQVRLYGPTNFAPIINHVARFAAQAAQQRTASQYFVLLLLTDGAVTDVEATCKAVVEASKLPMSVIIVGVGGADFEVMEQLDADGGPLRTRSGEAAARDIVQFVPYRRFQNAPRETLAMTVLAEVPTQMVSYFKAQGWAPLKTLPAPAKGPAQAPQV.

2 consecutive C2 domains span residues 1–113 (MAHC…TLPL) and 122–244 (GRGT…ECIH). 7 residues coordinate Ca(2+): Asp21, Asp27, Asp79, Asp81, Asp91, Asp152, and Asp158. Residue Lys170 is modified to N6-acetyllysine. 3 residues coordinate Ca(2+): Asp213, Asp215, and Asp221. A VWFA domain is found at 282-484 (QINFTVGVDF…AARDIVQFVP (203 aa)).

This sequence belongs to the copine family. Homodimer; homodimerizes via its C2 domains. Interacts with p65/RELA (via N-terminus); this interaction induces proteolytic cleavage of p65/RELA subunit and inhibition of NF-kappa-B transcriptional activity. Interacts (via VWFA domain) with ACTB, CCDC22, MYCBP2, PPP5C, RDX and UBE2O. Requires Ca(2+) as cofactor. Expressed in liver, brain, heart, intestine, kidney and lung (at protein level).

It localises to the nucleus. Its subcellular location is the cytoplasm. The protein localises to the cell membrane. Its function is as follows. Calcium-dependent phospholipid-binding protein that plays a role in calcium-mediated intracellular processes. Involved in the TNF-alpha receptor signaling pathway in a calcium-dependent manner. Exhibits calcium-dependent phospholipid binding properties. Plays a role in neuronal progenitor cell differentiation; induces neurite outgrowth via a AKT-dependent signaling cascade and calcium-independent manner. May recruit target proteins to the cell membrane in a calcium-dependent manner. May function in membrane trafficking. Involved in TNF-alpha-induced NF-kappa-B transcriptional repression by inducing endoprotease processing of the transcription factor NF-kappa-B p65/RELA subunit. Also induces endoprotease processing of NF-kappa-B p50/NFKB1, p52/NFKB2, RELB and REL. The protein is Copine-1 of Rattus norvegicus (Rat).